We begin with the raw amino-acid sequence, 212 residues long: Acyl-homoserine-lactone synthase (212 aa).

Belongs to the autoinducer synthase family.

The catalysed reaction is a fatty acyl-[ACP] + S-adenosyl-L-methionine = an N-acyl-L-homoserine lactone + S-methyl-5'-thioadenosine + holo-[ACP] + H(+). Required for the synthesis of OHHL (N-(3-oxohexanoyl)-L-homoserine lactone), an autoinducer molecule which binds to ExpR and thus acts in virulence (soft rot disease) through the activation of genes for plant tissue macerating enzymes. This is Acyl-homoserine-lactone synthase (expI) from Dickeya dadantii (strain 3937) (Erwinia chrysanthemi (strain 3937)).